The sequence spans 322 residues: Eukaryotic translation initiation factor 3 subunit I (322 aa).

WD repeat units follow at residues 4 to 43 (GHER…RLGT), 46 to 85 (GHQG…VIAS), 141 to 180 (MTES…KVVD), 184 to 223 (DHSA…CLKS), and 281 to 322 (GHFG…NIFE).

The protein belongs to the eIF-3 subunit I family. Component of the eukaryotic translation initiation factor 3 (eIF-3) complex. The eIF-3 complex interacts with pix.

The protein resides in the cytoplasm. Component of the eukaryotic translation initiation factor 3 (eIF-3) complex, which is involved in protein synthesis of a specialized repertoire of mRNAs and, together with other initiation factors, stimulates binding of mRNA and methionyl-tRNAi to the 40S ribosome. The eIF-3 complex specifically targets and initiates translation of a subset of mRNAs involved in cell proliferation. The sequence is that of Eukaryotic translation initiation factor 3 subunit I from Drosophila yakuba (Fruit fly).